We begin with the raw amino-acid sequence, 346 residues long: Ribosomal RNA small subunit methyltransferase H (346 aa).

S-adenosyl-L-methionine-binding positions include 46–48, aspartate 63, phenylalanine 90, aspartate 113, and glutamine 120; that span reads GGY. The tract at residues 270 to 327 is disordered; it reads GGSAGSRHMPETHMRLPSFTPAVKGAVGPTPEEEERNPRARSAKLRAGIRTENSPLED.

It belongs to the methyltransferase superfamily. RsmH family.

The protein localises to the cytoplasm. The enzyme catalyses cytidine(1402) in 16S rRNA + S-adenosyl-L-methionine = N(4)-methylcytidine(1402) in 16S rRNA + S-adenosyl-L-homocysteine + H(+). Functionally, specifically methylates the N4 position of cytidine in position 1402 (C1402) of 16S rRNA. This chain is Ribosomal RNA small subunit methyltransferase H, found in Brucella ovis (strain ATCC 25840 / 63/290 / NCTC 10512).